The chain runs to 428 residues: 3-phosphoshikimate 1-carboxyvinyltransferase (428 aa).

Positions 22, 23, and 27 each coordinate 3-phosphoshikimate. A phosphoenolpyruvate-binding site is contributed by Lys-22. Phosphoenolpyruvate is bound by residues Gly-96 and Arg-124. Residues Ser-169, Ser-170, Gln-171, Ser-197, Asp-313, Asn-336, and Lys-340 each coordinate 3-phosphoshikimate. Residue Gln-171 participates in phosphoenolpyruvate binding. The Proton acceptor role is filled by Asp-313. Residues Arg-344, Arg-386, and Lys-411 each contribute to the phosphoenolpyruvate site.

It belongs to the EPSP synthase family. In terms of assembly, monomer.

It localises to the cytoplasm. The catalysed reaction is 3-phosphoshikimate + phosphoenolpyruvate = 5-O-(1-carboxyvinyl)-3-phosphoshikimate + phosphate. The protein operates within metabolic intermediate biosynthesis; chorismate biosynthesis; chorismate from D-erythrose 4-phosphate and phosphoenolpyruvate: step 6/7. Its function is as follows. Catalyzes the transfer of the enolpyruvyl moiety of phosphoenolpyruvate (PEP) to the 5-hydroxyl of shikimate-3-phosphate (S3P) to produce enolpyruvyl shikimate-3-phosphate and inorganic phosphate. The protein is 3-phosphoshikimate 1-carboxyvinyltransferase of Photorhabdus laumondii subsp. laumondii (strain DSM 15139 / CIP 105565 / TT01) (Photorhabdus luminescens subsp. laumondii).